The chain runs to 140 residues: Histone H3-like protein (140 aa).

Residues 1–36 (MSRTKQTASKALGGKAPRKGISAKSIPSSGCSPAMP) form a disordered region. An N6,N6,N6-trimethyllysine; alternate modification is found at Lys5. Lys5 is subject to N6,N6-dimethyllysine; alternate. An N6-methyllysine; alternate mark is found at Lys5 and Lys10. N6-acetyllysine; alternate occurs at positions 10, 15, 19, and 24. Lys15 is subject to N6,N6-dimethyllysine; alternate. Residues Lys19 and Lys24 each carry the N6-methyllysine; alternate modification. An N6-acetyllysine mark is found at Lys56 and Lys64.

The protein belongs to the histone H3 family. In terms of assembly, the nucleosome is a histone octamer containing two molecules each of H2A, H2B, H3 and H4 assembled in one H3-H4 heterotetramer and two H2A-H2B heterodimers. The octamer wraps approximately 147 bp of DNA. Mono-, di- and trimethylated to form H3K4me1/2/3. H3K4me activates gene expression by regulating transcription elongation and plays a role in telomere length maintenance. H3K4me enrichment correlates with transcription levels, and occurs in a 5' to 3' gradient with H3K4me3 enrichment at the 5'-end of genes, shifting to H3K4me2 and then H3K4me1. Post-translationally, acetylation of histone H3 leads to transcriptional activation.

The protein localises to the nucleus. Its subcellular location is the chromosome. In terms of biological role, core component of nucleosome. Nucleosomes wrap and compact DNA into chromatin, limiting DNA accessibility to the cellular machineries which require DNA as a template. Histones thereby play a central role in transcription regulation, DNA repair, DNA replication and chromosomal stability. DNA accessibility is regulated via a complex set of post-translational modifications of histones, also called histone code, and nucleosome remodeling. The protein is Histone H3-like protein of Encephalitozoon cuniculi (strain GB-M1) (Microsporidian parasite).